The primary structure comprises 121 residues: uncharacterized protein (121 aa).

Transmembrane regions (helical) follow at residues 26 to 46 (FIALFDFPLLFIYFPFLILVL) and 72 to 92 (AFLTHEECGLVLQYIYYWLGL).

It localises to the membrane. This is an uncharacterized protein from Saccharomyces cerevisiae (strain ATCC 204508 / S288c) (Baker's yeast).